Consider the following 64-residue polypeptide: uncharacterized protein (64 aa).

Residues 33–55 (YTPLGSYMIFGIVHYFCSYHIGI) traverse the membrane as a helical segment.

The protein localises to the membrane. This is an uncharacterized protein from Saccharomyces cerevisiae (strain ATCC 204508 / S288c) (Baker's yeast).